The primary structure comprises 689 residues: Glycine--tRNA ligase beta subunit (689 aa).

It belongs to the class-II aminoacyl-tRNA synthetase family. Tetramer of two alpha and two beta subunits.

Its subcellular location is the cytoplasm. It carries out the reaction tRNA(Gly) + glycine + ATP = glycyl-tRNA(Gly) + AMP + diphosphate. The chain is Glycine--tRNA ligase beta subunit from Coxiella burnetii (strain Dugway 5J108-111).